A 238-amino-acid polypeptide reads, in one-letter code: 1-(5-phosphoribosyl)-5-[(5-phosphoribosylamino)methylideneamino] imidazole-4-carboxamide isomerase (238 aa).

Catalysis depends on Asp-8, which acts as the Proton acceptor. The active-site Proton donor is the Asp-130.

The protein belongs to the HisA/HisF family.

The protein localises to the cytoplasm. It carries out the reaction 1-(5-phospho-beta-D-ribosyl)-5-[(5-phospho-beta-D-ribosylamino)methylideneamino]imidazole-4-carboxamide = 5-[(5-phospho-1-deoxy-D-ribulos-1-ylimino)methylamino]-1-(5-phospho-beta-D-ribosyl)imidazole-4-carboxamide. Its pathway is amino-acid biosynthesis; L-histidine biosynthesis; L-histidine from 5-phospho-alpha-D-ribose 1-diphosphate: step 4/9. This Methanococcus vannielii (strain ATCC 35089 / DSM 1224 / JCM 13029 / OCM 148 / SB) protein is 1-(5-phosphoribosyl)-5-[(5-phosphoribosylamino)methylideneamino] imidazole-4-carboxamide isomerase.